The sequence spans 308 residues: Ornithine carbamoyltransferase (308 aa).

Residues 57 to 60, glutamine 84, arginine 108, and 135 to 138 contribute to the carbamoyl phosphate site; these read STRT and HPCQ. L-ornithine-binding positions include asparagine 166, aspartate 224, and 228–229; that span reads SM. Carbamoyl phosphate contacts are provided by residues 264-265 and arginine 292; that span reads CL.

This sequence belongs to the aspartate/ornithine carbamoyltransferase superfamily. OTCase family.

It localises to the cytoplasm. It catalyses the reaction carbamoyl phosphate + L-ornithine = L-citrulline + phosphate + H(+). Its pathway is amino-acid biosynthesis; L-arginine biosynthesis; L-arginine from L-ornithine and carbamoyl phosphate: step 1/3. In terms of biological role, reversibly catalyzes the transfer of the carbamoyl group from carbamoyl phosphate (CP) to the N(epsilon) atom of ornithine (ORN) to produce L-citrulline. The protein is Ornithine carbamoyltransferase of Ralstonia nicotianae (strain ATCC BAA-1114 / GMI1000) (Ralstonia solanacearum).